Here is a 317-residue protein sequence, read N- to C-terminus: Protoheme IX farnesyltransferase (317 aa).

6 helical membrane passes run 25–45, 54–74, 117–137, 167–189, 244–264, and 281–301; these read FFAL…LVGM, PVIG…SGCL, LMLG…TIVF, IGQA…IIFI, LGFG…AMLV, and AAMS…SALL.

This sequence belongs to the UbiA prenyltransferase family. Protoheme IX farnesyltransferase subfamily.

It localises to the cell inner membrane. The catalysed reaction is heme b + (2E,6E)-farnesyl diphosphate + H2O = Fe(II)-heme o + diphosphate. It participates in porphyrin-containing compound metabolism; heme O biosynthesis; heme O from protoheme: step 1/1. Converts heme B (protoheme IX) to heme O by substitution of the vinyl group on carbon 2 of heme B porphyrin ring with a hydroxyethyl farnesyl side group. The polypeptide is Protoheme IX farnesyltransferase (Methylobacterium nodulans (strain LMG 21967 / CNCM I-2342 / ORS 2060)).